The chain runs to 390 residues: Galactokinase (390 aa).

A substrate-binding site is contributed by 33-36; sequence EHTD. Residues serine 67 and 124–130 each bind ATP; that span reads GSGLSSS. 2 residues coordinate Mg(2+): serine 130 and glutamate 162. Residue aspartate 174 is the Proton acceptor of the active site. Tyrosine 224 provides a ligand contact to substrate.

The protein belongs to the GHMP kinase family. GalK subfamily.

It is found in the cytoplasm. The enzyme catalyses alpha-D-galactose + ATP = alpha-D-galactose 1-phosphate + ADP + H(+). It participates in carbohydrate metabolism; galactose metabolism. Functionally, catalyzes the transfer of the gamma-phosphate of ATP to D-galactose to form alpha-D-galactose-1-phosphate (Gal-1-P). In Streptococcus suis (strain 05ZYH33), this protein is Galactokinase.